The primary structure comprises 112 residues: uncharacterized protein (112 aa).

The helical transmembrane segment at 82 to 104 threads the bilayer; it reads IFFGFSIIASYFLKFHLLYVILL.

It is found in the membrane. This is an uncharacterized protein from Pasteurella multocida (strain Pm70).